Here is a 116-residue protein sequence, read N- to C-terminus: Beta-2-microglobulin (116 aa).

An N-terminal signal peptide occupies residues 1–19 (MRALITFALLCLLYITVQG). An Ig-like C1-type domain is found at 24–111 (PKVHVYSHFP…RHMKETKKFS (88 aa)). Cys-44 and Cys-99 form a disulfide bridge.

The protein belongs to the beta-2-microglobulin family. Heterodimer of an alpha chain and a beta chain. Beta-2-microglobulin is the beta-chain of major histocompatibility complex class I molecules.

It is found in the secreted. Component of the class I major histocompatibility complex (MHC). Involved in the presentation of peptide antigens to the immune system. This Danio rerio (Zebrafish) protein is Beta-2-microglobulin (b2m).